Here is a 1072-residue protein sequence, read N- to C-terminus: MTSLLGLAVRLLLFQPALMVFWASQVRQNCRNGSYEISVLMMDNSAYKEPMQNLREAVEEGLDIVRKRLREADLNVTVNATFIYSDGLIHKSGDCRSSTCEGLDLLREITRDHKMGCALMGPSCTYSTFQMYLDTELNYPMISAGSYGLSCDYKETLTRILPPARKLMYFLVDFWKVNNASFKPFSWNSSYVYKNGSEPEDCFWYLNALEAGVSYFSEVLNFKDVLRRSEQFQEILTGHNRKSNVIVMCGTPESFYDVKGDLQVAEDTVVILVDLFSNHYFEENTTAPEYMDNVLVLTLPSEQSTSNTSVAERFSSGRSDFSLAYLEGTLLFGHMLQTFLENGENVTGPKFARAFRNLTFQGFAGPVTLDDSGDIDNIMSLLYVSLDTRKYKVLMKYDTHKNKTIPVAENPNFIWKNHKLPNDVPGLGPQILMIAVFTLTGILVVLLLIALLVLRKYRRDHALRQKKWSHIPSENIFPLETNETNHISLKIDDDRRRDTIQRVRQCKYDKKKVILKDLKHSDGNFSEKQKIDLNKLLQSDYYNLTKFYGTVKLDTRIFGVVEYCERGSLREVLNDTISYPDGTFMDWEFKISVLNDIAKGMSYLHSSKIEVHGRLKSTNCVVDSRMVVKITDFGCNSILPPKKDLWTAPEHLRQATISQKGDVYSFAIIAQEIILRKETFYTLSCRDHNEKIFRVENSYGKPFRPDLFLETADEKELEVYLLVKSCWEEDPEKRPDFKKIESTLAKIFGLFHDQKNESYMDTLIRRLQLYSRNLEHLVEERTQLYKAERDRADHLNFMLLPRLVVKSLKEKGIVEPELYEEVTIYFSDIVGFTTICKYSTPMEVVDMLNDIYKSFDQIVDHHDVYKVETIGDAYVVASGLPMRNGNRHAVDISKMALDILSFIGTFELEHLPGLPVWIRIGVHSGPCAAGVVGIKMPRYCLFGDTVNTASRMESTGLPLRIHMSSSTITILKRTDCQFLYEVRGETYLKGRGTETTYWLTGMKDQEYNLPSPPTVENQQRLQTEFSDMIVSALQKRQASGKKSRRPTRVASYKKGFLEYMQLNNSDHDSTYF.

Residues 1 to 19 (MTSLLGLAVRLLLFQPALM) form the signal peptide. At 20 to 433 (VFWASQVRQN…VPGLGPQILM (414 aa)) the chain is on the extracellular side. N-linked (GlcNAc...) asparagine glycosylation is found at N32, N75, N79, N179, N188, N195, N284, N307, N345, and N402. The chain crosses the membrane as a helical span at residues 434–454 (IAVFTLTGILVVLLLIALLVL). Residues 455-1072 (RKYRRDHALR…NNSDHDSTYF (618 aa)) lie on the Cytoplasmic side of the membrane. Residues 489–748 (LKIDDDRRRD…KIESTLAKIF (260 aa)) form the Protein kinase domain. The Guanylate cyclase domain occupies 823–953 (TIYFSDIVGF…DTVNTASRME (131 aa)).

It belongs to the adenylyl cyclase class-4/guanylyl cyclase family. As to quaternary structure, homotrimer. Interacts via its C-terminal region with NHERF4. Interacts with the lectin chaperone VIP36. In terms of processing, glycosylation at Asn-75 and/or Asn-79 is required for interaction with VIP36 while glycosylation at Asn-345 and Asn-402 modulates ligand-mediated GC-C activation.

Its subcellular location is the cell membrane. It localises to the endoplasmic reticulum membrane. It catalyses the reaction GTP = 3',5'-cyclic GMP + diphosphate. Functionally, guanylyl cyclase that catalyzes synthesis of cyclic GMP (cGMP) from GTP. The sequence is that of Guanylyl cyclase C (Gucy2c) from Mus musculus (Mouse).